The primary structure comprises 385 residues: GDP-D-glucose phosphorylase 1 (385 aa).

The active-site Tele-GMP-histidine intermediate is the H218.

It belongs to the GDPGP1 family.

The protein localises to the cytoplasm. It catalyses the reaction GDP-alpha-D-glucose + phosphate = alpha-D-glucose 1-phosphate + GDP + H(+). In terms of biological role, specific and highly efficient GDP-D-glucose phosphorylase regulating the levels of GDP-D-glucose in cells. In Homo sapiens (Human), this protein is GDP-D-glucose phosphorylase 1 (GDPGP1).